The primary structure comprises 443 residues: Clustered-asparagine-rich protein (443 aa).

One can recognise an RRM 1 domain in the interval 16 to 106 (TKLHIQNIPP…RNIDAKFAVP (91 aa)). Positions 253 to 279 (NHLNNNNNNINNNNNNNNNNNNNNNVM) are disordered. The segment covering 256-277 (NNNNNNINNNNNNNNNNNNNNN) has biased composition (low complexity). Positions 342–435 (SSITIMKKQN…KYLKVQLKKG (94 aa)) constitute an RRM 2 domain.

This Plasmodium falciparum protein is Clustered-asparagine-rich protein.